The primary structure comprises 455 residues: MDQSAAVEGVPQKKYLTLRRSVDVSSSYNRLYYLKKHGLSLPPIEPETSFTANIMPPDAYKRNDRIVNLPTKFTHLSSNKVKHVIPAIQWSPEGRRLIVATFSGEFSLWNGSSFTFETIMQAHDTSVTTMKYSHAGDWMISGDADGTIKIWQPNFNMVKELDRIHTEGIRDVAFSNNDSKFVTCSDDNILKIWNFSNGQQERVLSGHHWDVRSCDWHPELGLIVSGSKDNLVKLWDPRSGQCVSTLLKFKHTVLKTRFQPTKGNLLAAISKDKSCRVFDLRASMNELMCVRDEVDFMELEWSTINESMFTVGCYDGSLKHFDLGQDTEKPIHIIPFAHEKCISAIAYNPVGHILATAAKDRTIRFWTRARPVDPNAFDDPTYNNKKMTGWFFGINNDINAVREKSEYGAAPPPASTAFPQQTQYNNNISRVPEIKEPTPTTDKEQRTSILPGLSI.

WD repeat units follow at residues 80–119 (KVKH…FETI), 122–162 (AHDT…KELD), 164–203 (IHTE…QERV), 206–245 (GHHW…CVST), 248–288 (KFKH…NELM), 291–331 (RDEV…EKPI), and 337–376 (AHEK…DPNA). Disordered stretches follow at residues 406-425 (EYGA…TQYN) and 430-455 (RVPE…GLSI). The span at 432 to 446 (PEIKEPTPTTDKEQR) shows a compositional bias: basic and acidic residues.

The protein localises to the nucleus. Functionally, required for 3'-end cleavage and polyadenylation of pre-mRNAs. Also involved in chromosome segregation where it has a role in chromosome attachment to the mitotic spindle. This Candida glabrata (strain ATCC 2001 / BCRC 20586 / JCM 3761 / NBRC 0622 / NRRL Y-65 / CBS 138) (Yeast) protein is Polyadenylation factor subunit 2 (PFS2).